Here is an 802-residue protein sequence, read N- to C-terminus: Ras GTPase-activating protein 4 (802 aa).

C2 domains are found at residues M1 to T105 and V116 to F232. 12 residues coordinate Ca(2+): D21, D27, D74, D76, S79, D82, D149, D155, D202, D204, S207, and D210. The 229-residue stretch at G317 to L545 folds into the Ras-GAP domain. The region spanning P565–T672 is the PH domain. Residues N674–R710 form a Btk-type zinc finger. H682, C693, C694, and C704 together coordinate Zn(2+).

Requires Ca(2+) as cofactor. In terms of tissue distribution, isoform 2 is expressed in osteoblasts.

It localises to the cytoplasm. It is found in the cytosol. Its subcellular location is the cell membrane. Functionally, ca(2+)-dependent Ras GTPase-activating protein, that switches off the Ras-MAPK pathway following a stimulus that elevates intracellular calcium. Functions as an adaptor for Cdc42 and Rac1 during FcR-mediated phagocytosis. Isoform 2 activates the Ras pathway and promotes RANKL shedding by modulating the expression of MMP14. The chain is Ras GTPase-activating protein 4 (Rasa4) from Mus musculus (Mouse).